The chain runs to 1834 residues: MASTLPSTVVCGSQTSPPSRDCLQRIQADLKDPKLKELAKAVDELPEFWSHLVEVKPVLSQVNDAPLKKLKDWAKDESVLNIPEGLPNILLAPLTVIIHLVQYLRFAHSLDANDSQEDQHHRILQSTSKGGFQGLCTGFLSAAALACSRTRSDIWCNATVALRLATCVGAYVDLDRLTYDNTDVHTCMIIHWEDNCGKDQVTEVLKGYPGVYISVELDNRSITVTAKQSQVSLLRGDLAARGAKLTRIPIYGRYHSRTHAEILQDLLEICSNDESLRFPIISAPIVPLRNNTTGGLITSAEKLHELALKCMLTEPADWYSTMSETVSSLMLQPVINEHPLILELGHVSCLPRSLTASANIRAFTPLLTLTASPNEPDASRYDYPEHSIAVIGAACKFTGAETMQQFWELIRAGGTMVGELPEGRIALDKKSLRKPPREEPLRGNFLSRAGHFDHGLFGLSQREARYMDPQQRIALQVAYHAVESSEYFRSGIKDKNVGCYVGVGGSDYDHNVCSHAPTAFSFTGTARAFVSGRISHHFGWTGPSMTIDTACSSSAVAIHQACKDIRMGECRMALAGGVNIISCPNMQQNLAAARFLSPTGGPCRPFDAFADGYCRGEGCGFVMLKKLSCAVADKDEILGVIVGSAANHCDGNDAITVPKSHSQIDLYRKALSLAAMQPKDITYVEAHGTGTSRGDPVECRSIRQVFGGERPTLHFGSVKANVGHTEAASGIAGLLKVLLMIRNQRIPPQANFTQLNSSIPPLEPDNLSITTNELEWKATFRAACVNNYGAAGNNTAVIVCEPPRLKPSAGNNHILSGYPFLITGQSGRSLKMYCTALGEWLENTDAPLSDIAFSVTRRQNRTLRRRITFAARSLKDMKNILGQQARLDQQSSPSPKPKPVVLVFAGQTGNVVYLHKDAYEGSSLLRSHIDECDKILREMGLRGLIAFLFDQQPIEDVVLLHCLFFSLQYACAAAWLDAGLPVQRVIGHSIGQFTAMCISGVTTLADTLKIVAGRARLIQQKWAKERGCMLAIEVDRQGALELARSVPGHKIEVACFNGARNHVLVGTEVAIQTLEAKTSCKTRRLKTTHGFHSELVDHWLDDYMALAQSITYATPIIPIETCSEGGSWKEFTPEMLPRHSREAVYFFDAISRVDKELGPCTWVEGGVGSKGIALVKCALGTNTSGHSFHRLQLDSSEPLASLTDTTIQMWDEGVDVQFWLYHDTEKITFDSCDVPAYQFDETEFWLLRSDQARQSDLQRGRVISDRYKPLVYLLRDEGFRGEPRKLHFGVNQYHPDFDRYLHGREVLGEVLCPVSVFVELAAKAAAICGGRECSTAATQVQVLNLEIHNPLGHAPGARVGLRLKRIGSCKWGFSVISDKDVQSICHATGVISLRQERHGKLEIGPQWSVIQRVIGYSHIQDVLDDSSAISLKEGIIYKVLEKVAEYKPCHRAIKSMTIKGTAAVAQLEMPAISRDSSEITVSDPLVMDQFALIAEVLALCRDDCKRDDVFICSGLSELVTFKSLQSGLGPWTVYTQQTPCGPRELLSDTFVFDSTSKQLIIGLLGARFVRITASSLNGIVKRANLNSQTSELSVETDAVNHPASVAYPPSNNNDTSDILSILSHLLHEITGLPPSEISASTPLMEASVDSLAATELENRIQEEFHLHRPISLYERQFNVGTLCQEIQTQRDDRLARASRTTTATRNTSFSLGRRTSSTESLPDDAEARFISKSAAVLAQLSRMLSESFNITESILPGTELRSLGLDSLVAVELEYDLQQAFGLKVDLMQLSPELTVGGLARLILASESQTSGHIASSMMDCRQTTEGKSQMYLG.

The Starter acyltransferase (SAT) domain maps to 91–255 (LAPLTVIIHL…TRIPIYGRYH (165 aa)). A Ketosynthase family 3 (KS3) domain is found at 385 to 801 (EHSIAVIGAA…GNNTAVIVCE (417 aa)). Residues cysteine 551, histidine 687, and histidine 724 each act as for beta-ketoacyl synthase activity in the active site. Residues 919–1164 (YEGSSLLRSH…KELGPCTWVE (246 aa)) form the Malonyl-CoA:ACP transacylase (MAT) domain. The tract at residues 1269 to 1398 (PLVYLLRDEG…GVISLRQERH (130 aa)) is N-terminal hotdog fold. The region spanning 1269-1577 (PLVYLLRDEG…FVRITASSLN (309 aa)) is the PKS/mFAS DH domain. A product template (PT) domain region spans residues 1269–1577 (PLVYLLRDEG…FVRITASSLN (309 aa)). The segment at 1428–1577 (AISLKEGIIY…FVRITASSLN (150 aa)) is C-terminal hotdog fold. The Carrier 1 domain maps to 1616–1690 (SDILSILSHL…TLCQEIQTQR (75 aa)). Position 1650 is an O-(pantetheine 4'-phosphoryl)serine (serine 1650). The disordered stretch occupies residues 1693–1720 (RLARASRTTTATRNTSFSLGRRTSSTES). The span at 1697–1710 (ASRTTTATRNTSFS) shows a compositional bias: low complexity. In terms of domain architecture, Carrier 2 spans 1731–1807 (SKSAAVLAQL…GLARLILASE (77 aa)). O-(pantetheine 4'-phosphoryl)serine is present on serine 1767.

Pantetheine 4'-phosphate serves as cofactor.

It carries out the reaction 2 malonyl-CoA + acetyl-CoA + 2 H(+) = triacetate lactone + 2 CO2 + 3 CoA. It functions in the pathway secondary metabolite biosynthesis; terpenoid biosynthesis. Functionally, non-reducing polyketide synthase; part of the gene cluster that mediates the biosynthesis of meroterpenoids called sartorypyrones. The biosynthesis of sartorypyrones begins with the production of triacetic acid lactone (TAL) by the NR-PKS spyA using one molecule of acetyl-CoA and two molecules of malonyl-CoA. As spyA lacks a thioesterase (TE) domain, TAL is likely generated through self-release from spyA by spontaneous lactonization. After production of TAL, the prenyltransferase spyF then conjugates geranylgeranyl pyrophosphate (GGPP) to TAL to form geranylgeranyl-triacetate lactone, for which the pathway-specific geranylgeranyl pyrophosphate synthase (GGPS) spyE is required to provide GGPP. Subsequently, geranylgeranyl-triacetate lactone is epoxidized at the terminal olein by the FAD-dependent monooxygenase spyC, followed by cyclization of the terpenoid component catalyzed by the terpene cyclase spyD to produce both the bicyclic sartorypyrone F and the monocyclic sartorypyrone D. Finally, the last step of the biosynthesis involves the acetylation of the meroterpenoids sartorypyrones D and F by the acetyltransferase SpyB to produce sartorypyrones A and G, respectively. This is Non-reducing polyketide synthase spyA from Aspergillus fumigatus (strain ATCC MYA-4609 / CBS 101355 / FGSC A1100 / Af293) (Neosartorya fumigata).